Here is a 638-residue protein sequence, read N- to C-terminus: 3D-(3,5/4)-trihydroxycyclohexane-1,2-dione hydrolase (638 aa).

Glutamate 67 contributes to the thiamine diphosphate binding site. Residues 442-523 are thiamine pyrophosphate binding; it reads SLPGDLQRLW…INIMLFDNSG (82 aa). The Mg(2+) site is built by aspartate 494 and asparagine 521.

The protein belongs to the TPP enzyme family. Mg(2+) is required as a cofactor. Thiamine diphosphate serves as cofactor.

It carries out the reaction 3D-3,5/4-trihydroxycyclohexane-1,2-dione + H2O = 5-deoxy-D-glucuronate + H(+). It participates in polyol metabolism; myo-inositol degradation into acetyl-CoA; acetyl-CoA from myo-inositol: step 3/7. In terms of biological role, involved in the cleavage of the C1-C2 bond of 3D-(3,5/4)-trihydroxycyclohexane-1,2-dione (THcHDO) to yield 5-deoxy-glucuronate (5DG). This is 3D-(3,5/4)-trihydroxycyclohexane-1,2-dione hydrolase from Listeria innocua serovar 6a (strain ATCC BAA-680 / CLIP 11262).